The sequence spans 90 residues: Acylphosphatase (90 aa).

The region spanning 3–90 (AVTLKATGRV…QNYHDFRITN (88 aa)) is the Acylphosphatase-like domain. Residues Arg-18 and Asn-36 contribute to the active site.

Belongs to the acylphosphatase family.

It carries out the reaction an acyl phosphate + H2O = a carboxylate + phosphate + H(+). The polypeptide is Acylphosphatase (acyP) (Lactiplantibacillus plantarum (strain ATCC BAA-793 / NCIMB 8826 / WCFS1) (Lactobacillus plantarum)).